Consider the following 95-residue polypeptide: Protein TusB (95 aa).

It belongs to the DsrH/TusB family. As to quaternary structure, heterohexamer, formed by a dimer of trimers. The hexameric TusBCD complex contains 2 copies each of TusB, TusC and TusD. The TusBCD complex interacts with TusE.

The protein localises to the cytoplasm. Part of a sulfur-relay system required for 2-thiolation of 5-methylaminomethyl-2-thiouridine (mnm(5)s(2)U) at tRNA wobble positions. The protein is Protein TusB of Escherichia coli O157:H7.